A 236-amino-acid polypeptide reads, in one-letter code: Eukaryotic translation initiation factor 3 subunit J (236 aa).

2 disordered regions span residues 1–88 (MADD…LANM) and 188–236 (SEKQ…DDFM). Residues 28–46 (GEDDDEDVKESWEDEEEKK) show a composition bias toward acidic residues. 3 stretches are compositionally biased toward basic and acidic residues: residues 47–58 (DEEKPTKTEAPV), 68–88 (AKLE…LANM), and 188–197 (SEKQKMEKAN). 2 coiled-coil regions span residues 61–112 (KPNK…LKSA) and 174–209 (ADIK…KGKV). A compositionally biased stretch (basic residues) spans 201–210 (SAAKAKGKVS).

It belongs to the eIF-3 subunit J family. In terms of assembly, component of the eukaryotic translation initiation factor 3 (eIF-3) complex. The eIF-3 complex interacts with pix.

It localises to the cytoplasm. Component of the eukaryotic translation initiation factor 3 (eIF-3) complex, which is involved in protein synthesis of a specialized repertoire of mRNAs and, together with other initiation factors, stimulates binding of mRNA and methionyl-tRNAi to the 40S ribosome. The eIF-3 complex specifically targets and initiates translation of a subset of mRNAs involved in cell proliferation. This is Eukaryotic translation initiation factor 3 subunit J from Drosophila virilis (Fruit fly).